Reading from the N-terminus, the 140-residue chain is Small ribosomal subunit protein uS19 (140 aa).

The protein belongs to the universal ribosomal protein uS19 family.

In terms of biological role, protein S19 forms a complex with S13 that binds strongly to the 16S ribosomal RNA. In Sulfurisphaera tokodaii (strain DSM 16993 / JCM 10545 / NBRC 100140 / 7) (Sulfolobus tokodaii), this protein is Small ribosomal subunit protein uS19 (rps19).